The sequence spans 128 residues: Sulfurtransferase TusD (128 aa).

Catalysis depends on Cys-78, which acts as the Cysteine persulfide intermediate.

The protein belongs to the DsrE/TusD family. Heterohexamer, formed by a dimer of trimers. The hexameric TusBCD complex contains 2 copies each of TusB, TusC and TusD. The TusBCD complex interacts with TusE.

Its subcellular location is the cytoplasm. Functionally, part of a sulfur-relay system required for 2-thiolation of 5-methylaminomethyl-2-thiouridine (mnm(5)s(2)U) at tRNA wobble positions. Accepts sulfur from TusA and transfers it in turn to TusE. The polypeptide is Sulfurtransferase TusD (Escherichia coli O157:H7).